Consider the following 516-residue polypeptide: GMP synthase [glutamine-hydrolyzing] (516 aa).

One can recognise a Glutamine amidotransferase type-1 domain in the interval 6-199 (KVLILDFGSQ…LFEIAGLTSG (194 aa)). The Nucleophile role is filled by C83. Residues H173 and E175 contribute to the active site. Positions 200 to 391 (WTMSSFLETE…LGMPDFIIWR (192 aa)) constitute a GMPS ATP-PPase domain. 227-233 (SGGVDST) is an ATP binding site.

In terms of assembly, homodimer.

It carries out the reaction XMP + L-glutamine + ATP + H2O = GMP + L-glutamate + AMP + diphosphate + 2 H(+). Its pathway is purine metabolism; GMP biosynthesis; GMP from XMP (L-Gln route): step 1/1. Functionally, catalyzes the synthesis of GMP from XMP. In Solidesulfovibrio magneticus (strain ATCC 700980 / DSM 13731 / RS-1) (Desulfovibrio magneticus), this protein is GMP synthase [glutamine-hydrolyzing].